The chain runs to 140 residues: Nucleoside diphosphate kinase (140 aa).

Residues Lys-11, Phe-59, Arg-87, Thr-93, Arg-104, and Asn-114 each coordinate ATP. His-117 serves as the catalytic Pros-phosphohistidine intermediate.

It belongs to the NDK family. As to quaternary structure, homotetramer. Requires Mg(2+) as cofactor.

It localises to the cytoplasm. The catalysed reaction is a 2'-deoxyribonucleoside 5'-diphosphate + ATP = a 2'-deoxyribonucleoside 5'-triphosphate + ADP. The enzyme catalyses a ribonucleoside 5'-diphosphate + ATP = a ribonucleoside 5'-triphosphate + ADP. Major role in the synthesis of nucleoside triphosphates other than ATP. The ATP gamma phosphate is transferred to the NDP beta phosphate via a ping-pong mechanism, using a phosphorylated active-site intermediate. The protein is Nucleoside diphosphate kinase of Rhodopseudomonas palustris (strain ATCC BAA-98 / CGA009).